A 188-amino-acid chain; its full sequence is F7-2 fimbrial protein (188 aa).

The first 21 residues, 1-21, serve as a signal peptide directing secretion; it reads MIKSVIAGAVAMAVVSFGAYA. Cys43 and Cys82 are oxidised to a cystine.

This sequence belongs to the fimbrial protein family.

Its subcellular location is the fimbrium. Its function is as follows. Fimbriae (also called pili), polar filaments radiating from the surface of the bacterium to a length of 0.5-1.5 micrometers and numbering 100-300 per cell, enable bacteria to colonize the epithelium of specific host organs. The sequence is that of F7-2 fimbrial protein (F7-2) from Escherichia coli O6:H1 (strain CFT073 / ATCC 700928 / UPEC).